The chain runs to 468 residues: Zinc finger protein 672 (468 aa).

4 C2H2-type zinc fingers span residues 15 to 37 (YSCS…ERAH), 43 to 65 (FCCL…RWTH), 71 to 93 (YICS…LGTH), and 100 to 123 (RPCR…ARQH). The C2H2-type 5; degenerate zinc-finger motif lies at 129-151 (HRCPLCARSFRQSALPFHLARAH). C2H2-type zinc fingers lie at residues 167–189 (YHCT…SRIH), 202–224 (HLCG…LQRH), 230–252 (FKCP…QRTH), 258–280 (YACS…QRSH), 286–308 (HVCA…QRSH), 314–336 (FPCP…LRTH), 342–364 (YHCE…LRNH), 370–392 (HKCP…RKTH), and 398–420 (AECT…QRSH).

It belongs to the krueppel C2H2-type zinc-finger protein family.

It localises to the nucleus. Functionally, may be involved in transcriptional regulation. The protein is Zinc finger protein 672 (Znf672) of Mus musculus (Mouse).